Reading from the N-terminus, the 149-residue chain is Deoxyuridine 5'-triphosphate nucleotidohydrolase (149 aa).

Residues 68-70, Asn-81, 85-87, and Lys-95 contribute to the substrate site; these read RSG and TVD.

Belongs to the dUTPase family. Mg(2+) serves as cofactor.

The catalysed reaction is dUTP + H2O = dUMP + diphosphate + H(+). It participates in pyrimidine metabolism; dUMP biosynthesis; dUMP from dCTP (dUTP route): step 2/2. In terms of biological role, this enzyme is involved in nucleotide metabolism: it produces dUMP, the immediate precursor of thymidine nucleotides and it decreases the intracellular concentration of dUTP so that uracil cannot be incorporated into DNA. This Wolinella succinogenes (strain ATCC 29543 / DSM 1740 / CCUG 13145 / JCM 31913 / LMG 7466 / NCTC 11488 / FDC 602W) (Vibrio succinogenes) protein is Deoxyuridine 5'-triphosphate nucleotidohydrolase.